Consider the following 118-residue polypeptide: Late cornified envelope protein 1C (118 aa).

The span at 1–10 (MSCQQSQQQC) shows a compositional bias: low complexity. Disordered stretches follow at residues 1-23 (MSCQ…CPPK) and 87-118 (CHRP…GGCC). Positions 11–23 (QPPPKCTPKCPPK) are enriched in pro residues. Residues 90–103 (PQSSGCCSQPSGGS) are compositionally biased toward low complexity. A compositionally biased stretch (gly residues) spans 104 to 118 (SCCGGGSGQHSGGCC).

This sequence belongs to the LCE family. In terms of assembly, interacts with CYSRT1. As to expression, skin-specific. Expression was readily detected in adult trunk skin, adult arm skin, fetal skin, penal skin, vulva, esophagus and tongue. Not expressed in the cervix, rectum, lung, colon, or placenta.

Functionally, precursors of the cornified envelope of the stratum corneum. The sequence is that of Late cornified envelope protein 1C (LCE1C) from Homo sapiens (Human).